We begin with the raw amino-acid sequence, 417 residues long: Imidazolonepropionase (417 aa).

The Fe(3+) site is built by histidine 77 and histidine 79. Residues histidine 77 and histidine 79 each coordinate Zn(2+). 3 residues coordinate 4-imidazolone-5-propanoate: arginine 86, tyrosine 149, and histidine 182. Position 149 (tyrosine 149) interacts with N-formimidoyl-L-glutamate. Histidine 247 contacts Fe(3+). Histidine 247 is a binding site for Zn(2+). Residue glutamine 250 coordinates 4-imidazolone-5-propanoate. Aspartate 322 provides a ligand contact to Fe(3+). Aspartate 322 contributes to the Zn(2+) binding site. Asparagine 324 and glycine 326 together coordinate N-formimidoyl-L-glutamate. Position 327 (threonine 327) interacts with 4-imidazolone-5-propanoate.

Belongs to the metallo-dependent hydrolases superfamily. HutI family. Zn(2+) serves as cofactor. Fe(3+) is required as a cofactor.

The protein localises to the cytoplasm. The catalysed reaction is 4-imidazolone-5-propanoate + H2O = N-formimidoyl-L-glutamate. Its pathway is amino-acid degradation; L-histidine degradation into L-glutamate; N-formimidoyl-L-glutamate from L-histidine: step 3/3. Functionally, catalyzes the hydrolytic cleavage of the carbon-nitrogen bond in imidazolone-5-propanoate to yield N-formimidoyl-L-glutamate. It is the third step in the universal histidine degradation pathway. This chain is Imidazolonepropionase, found in Cupriavidus necator (strain ATCC 17699 / DSM 428 / KCTC 22496 / NCIMB 10442 / H16 / Stanier 337) (Ralstonia eutropha).